We begin with the raw amino-acid sequence, 298 residues long: Cyclin-dependent kinase 2 homolog (298 aa).

The region spanning 4 to 284 is the Protein kinase domain; sequence YHKMEKIGEG…AKEALKHDYF (281 aa). Residues 10-18 and Lys32 each bind ATP; that span reads IGEGTYGVV. Thr14 bears the Phosphothreonine mark. The residue at position 15 (Tyr15) is a Phosphotyrosine. Asp125 acts as the Proton acceptor in catalysis. At Thr158 the chain carries Phosphothreonine.

It belongs to the protein kinase superfamily. CMGC Ser/Thr protein kinase family. CDC2/CDKX subfamily. In terms of assembly, may form a complex composed of at least the catalytic subunit CRK2 and a cyclin. Requires Mg(2+) as cofactor.

Its subcellular location is the cytoplasm. It carries out the reaction L-seryl-[protein] + ATP = O-phospho-L-seryl-[protein] + ADP + H(+). The enzyme catalyses L-threonyl-[protein] + ATP = O-phospho-L-threonyl-[protein] + ADP + H(+). The catalysed reaction is [DNA-directed RNA polymerase] + ATP = phospho-[DNA-directed RNA polymerase] + ADP + H(+). With respect to regulation, phosphorylation at Thr-14 or Tyr-15 inactivates the enzyme, while phosphorylation at Thr-158 activates it. Its function is as follows. Serine/threonine-protein kinase. Involved in the control of the cell cycle. Required for entry into S-phase and mitosis. Probable component of the kinase complex that phosphorylates the repetitive C-terminus of RNA polymerase II. In Theileria parva (East coast fever infection agent), this protein is Cyclin-dependent kinase 2 homolog.